The chain runs to 189 residues: Ion-translocating oxidoreductase complex subunit B (189 aa).

The tract at residues 1–26 (MSQVIIAIILLGLLALAFGALLGYAA) is hydrophobic. Positions 32–90 (EGDPIIDQAEALLPQTQCGQCGYPGCRPYAEAIANGEKINKCPPGGTATMEKLAELMGV) constitute a 4Fe-4S domain. Residues cysteine 49, cysteine 52, cysteine 57, cysteine 73, cysteine 114, cysteine 117, cysteine 120, cysteine 124, cysteine 144, cysteine 147, cysteine 150, and cysteine 154 each contribute to the [4Fe-4S] cluster site. 2 4Fe-4S ferredoxin-type domains span residues 105-134 (KVAF…GTGK) and 135-164 (QMHT…MIPV).

This sequence belongs to the 4Fe4S bacterial-type ferredoxin family. RnfB subfamily. In terms of assembly, the complex is composed of six subunits: RnfA, RnfB, RnfC, RnfD, RnfE and RnfG. The cofactor is [4Fe-4S] cluster.

The protein localises to the cell inner membrane. Its function is as follows. Part of a membrane-bound complex that couples electron transfer with translocation of ions across the membrane. This is Ion-translocating oxidoreductase complex subunit B from Shewanella loihica (strain ATCC BAA-1088 / PV-4).